A 469-amino-acid chain; its full sequence is CBL-interacting serine/threonine-protein kinase 16 (469 aa).

One can recognise a Protein kinase domain in the interval 15–278 (YNIGRLLGTG…MSEIKMIPWF (264 aa)). ATP is bound by residues 21-29 (LGTGNFAKV) and Lys-44. The Proton acceptor role is filled by Asp-139. The interval 157-193 (DFGLSALMMPEGLGGRRGSSDDLLHTRCGTPAYVAPE) is activation loop. Phosphoserine is present on Ser-161. Thr-182 carries the phosphothreonine modification. Residues 290–320 (IDETIPSPPEPPTKKKKKDLNEKEDDGASPR) are disordered. An NAF domain is found at 317 to 342 (ASPRSFNAFQFITSMSSGFDLSNLFE). A PPI region spans residues 346–376 (KPKRMFTSKFPAKSVKERLETAAREMDMRVK). Residues 447–469 (DDEDDVTTNDNVDTNDNKINNVS) are disordered. The span at 454 to 469 (TNDNVDTNDNKINNVS) shows a compositional bias: low complexity.

This sequence belongs to the protein kinase superfamily. CAMK Ser/Thr protein kinase family. SNF1 subfamily. In terms of assembly, part of a K(+)-channel calcium-sensing kinase/phosphatase complex composed by a calcium sensor CBL (CBL1, CBL2, CBL3 or CBL9), a kinase CIPK (CIPK6, CIPK16 or CIPK23), a phosphatase PP2C (AIP1) and a K(+)-channel (AKT1). Interacts with AKT1, CBL1, CBL2, CBL3 and CBL9. Requires Mn(2+) as cofactor.

It catalyses the reaction L-seryl-[protein] + ATP = O-phospho-L-seryl-[protein] + ADP + H(+). The catalysed reaction is L-threonyl-[protein] + ATP = O-phospho-L-threonyl-[protein] + ADP + H(+). In terms of biological role, CIPK serine-threonine protein kinases interact with CBL proteins. Binding of a CBL protein to the regulatory NAF domain of CIPK protein lead to the activation of the kinase in a calcium-dependent manner. Downstream of CBL1, CBL2, CBL3 and CBL9, regulates by phosphorylation the K(+) conductance and uptake of AKT1. This chain is CBL-interacting serine/threonine-protein kinase 16 (CIPK16), found in Arabidopsis thaliana (Mouse-ear cress).